Reading from the N-terminus, the 637-residue chain is Anthranilate synthase, phenazine specific (637 aa).

The tract at residues 1-434 (MSQTAAHLME…QREQIQADFS (434 aa)) is anthranilate synthase component I. Residues 437-628 (QVLIVDAEDT…LRHALIHTPV (192 aa)) enclose the Glutamine amidotransferase type-1 domain. Residues C517, H602, and E604 each act as for GATase activity in the active site.

The catalysed reaction is chorismate + L-glutamine = anthranilate + pyruvate + L-glutamate + H(+). The protein operates within antibiotic biosynthesis; phenazine biosynthesis. Its function is as follows. Involved in the biosynthesis of the antibiotic, phenazine, a nitrogen-containing heterocyclic molecule having important roles in virulence, competition and biological control. The sequence is that of Anthranilate synthase, phenazine specific (phzB) from Pseudomonas chlororaphis (Pseudomonas aureofaciens).